Consider the following 428-residue polypeptide: MTESERKQIIALIQREVIPAIGCTEPIAVALCVAKATETLGAKPEKIKVLLSANILKNAMGVGIPGTGMIGLPIAVALGALIGKSDYQLEVLKDSTPEAVEEGKKLIDEKRICISLKEDITEKLYIEVTCEAGGEQATAIISGGHTTFVYVAKGDEVLLNKQQTSGEEEKEETLELTLRKVYDFALTAPLDEIRFILETARLNKKAAEQSFQGDYGHALGKMLRGTYEHKIMGDSVFSHILSYTSAACDARMAGAMIPVMSNSGSGNQGISATLPVVVYAEENGKSEEELIRALMMSHLTVIYIKQSLGRLSALCGCVVAATGSSCGITWLMGGSYKQVAFAVQNMIANLTGMICDGAKPSCALKVTTGVSTAVLSAVMAMENRCVTSVEGIIDEDVDQSIRNLTRIGSQGMNETDRVVLDIMTHKGC.

This sequence belongs to the UPF0597 family.

The chain is UPF0597 protein BF3560 from Bacteroides fragilis (strain ATCC 25285 / DSM 2151 / CCUG 4856 / JCM 11019 / LMG 10263 / NCTC 9343 / Onslow / VPI 2553 / EN-2).